We begin with the raw amino-acid sequence, 297 residues long: 4-hydroxy-tetrahydrodipicolinate synthase (297 aa).

Thr55 lines the pyruvate pocket. Tyr144 acts as the Proton donor/acceptor in catalysis. Catalysis depends on Lys172, which acts as the Schiff-base intermediate with substrate. Ile213 provides a ligand contact to pyruvate.

The protein belongs to the DapA family. Homotetramer; dimer of dimers.

The protein localises to the cytoplasm. The enzyme catalyses L-aspartate 4-semialdehyde + pyruvate = (2S,4S)-4-hydroxy-2,3,4,5-tetrahydrodipicolinate + H2O + H(+). It functions in the pathway amino-acid biosynthesis; L-lysine biosynthesis via DAP pathway; (S)-tetrahydrodipicolinate from L-aspartate: step 3/4. In terms of biological role, catalyzes the condensation of (S)-aspartate-beta-semialdehyde [(S)-ASA] and pyruvate to 4-hydroxy-tetrahydrodipicolinate (HTPA). The polypeptide is 4-hydroxy-tetrahydrodipicolinate synthase (Lactococcus lactis subsp. lactis (strain IL1403) (Streptococcus lactis)).